The following is a 128-amino-acid chain: NADH-quinone oxidoreductase subunit A (128 aa).

Helical transmembrane passes span 9–29 (FPIA…LALA), 68–88 (LLFI…VLLL), and 96–116 (LGWA…AGLV).

Belongs to the complex I subunit 3 family. In terms of assembly, NDH-1 is composed of 14 different subunits. Subunits NuoA, H, J, K, L, M, N constitute the membrane sector of the complex.

Its subcellular location is the cell inner membrane. The enzyme catalyses a quinone + NADH + 5 H(+)(in) = a quinol + NAD(+) + 4 H(+)(out). NDH-1 shuttles electrons from NADH, via FMN and iron-sulfur (Fe-S) centers, to quinones in the respiratory chain. The immediate electron acceptor for the enzyme in this species is believed to be ubiquinone. Couples the redox reaction to proton translocation (for every two electrons transferred, four hydrogen ions are translocated across the cytoplasmic membrane), and thus conserves the redox energy in a proton gradient. The polypeptide is NADH-quinone oxidoreductase subunit A (Anaeromyxobacter sp. (strain Fw109-5)).